A 792-amino-acid chain; its full sequence is Putative cellulose synthase-like protein H3 (792 aa).

The next 2 helical transmembrane spans lie at 25–45 and 55–75; these read AWMLANFVVLFLLLALLVRRA and VGGAAWRVAFACEAWFAFVWL. The interval 132 to 154 is disordered; that stretch reads GRHVRDDGGPGARAAGGDGEQGA. The segment covering 140–151 has biased composition (gly residues); it reads GPGARAAGGDGE. Residues Asp181 and Asp501 contribute to the active site. Transmembrane regions (helical) follow at residues 579 to 599, 613 to 632, 650 to 670, 706 to 726, 739 to 759, and 768 to 788; these read VWAVRGFVELCYELLVPYCLL, FNITLALFLTYNTYNFVEYM, IISASAWLLAFFTVLLKTIGL, VFIPVTALTMLNIVAITIGTW, GPGISEFMSCGWLLLCLLPFV, and YGIPWSVKLKASLLVALFLFC.

It belongs to the glycosyltransferase 2 family. Plant cellulose synthase-like H subfamily.

It localises to the golgi apparatus membrane. Its function is as follows. Thought to be a Golgi-localized beta-glycan synthase that polymerize the backbones of noncellulosic polysaccharides (hemicelluloses) of plant cell wall. The sequence is that of Putative cellulose synthase-like protein H3 (CSLH3) from Oryza sativa subsp. japonica (Rice).